Here is a 464-residue protein sequence, read N- to C-terminus: Argininosuccinate lyase (464 aa).

This sequence belongs to the lyase 1 family. Argininosuccinate lyase subfamily.

The protein localises to the cytoplasm. The catalysed reaction is 2-(N(omega)-L-arginino)succinate = fumarate + L-arginine. It functions in the pathway amino-acid biosynthesis; L-arginine biosynthesis; L-arginine from L-ornithine and carbamoyl phosphate: step 3/3. The sequence is that of Argininosuccinate lyase from Ectopseudomonas mendocina (strain ymp) (Pseudomonas mendocina).